A 274-amino-acid chain; its full sequence is ATP synthase subunit a (274 aa).

A run of 5 helical transmembrane segments spans residues 40 to 60 (FWVC…VILI), 110 to 130 (IFVW…LVPF), 149 to 169 (DVNI…FYSI), 224 to 244 (IFIL…SVPW), and 245 to 265 (AIFH…LTIV).

It belongs to the ATPase A chain family. As to quaternary structure, F-type ATPases have 2 components, CF(1) - the catalytic core - and CF(0) - the membrane proton channel. CF(1) has five subunits: alpha(3), beta(3), gamma(1), delta(1), epsilon(1). CF(0) has three main subunits: a(1), b(2) and c(9-12). The alpha and beta chains form an alternating ring which encloses part of the gamma chain. CF(1) is attached to CF(0) by a central stalk formed by the gamma and epsilon chains, while a peripheral stalk is formed by the delta and b chains.

The protein localises to the cell membrane. In terms of biological role, key component of the proton channel; it plays a direct role in the translocation of protons across the membrane. This is ATP synthase subunit a from Buchnera aphidicola subsp. Baizongia pistaciae (strain Bp).